The primary structure comprises 142 residues: ATP synthase F(0) complex subunit C3, mitochondrial (142 aa).

Residues 1 to 67 (MFACAKLACT…REFQTSAISR (67 aa)) constitute a mitochondrion transit peptide. A helical transmembrane segment spans residues 83–103 (VGVAGSGAGIGTVFGSLIIGY). At Lys-110 the chain carries N6,N6,N6-trimethyllysine. Residues 118 to 138 (ILGFALSEAMGLFCLMVAFLI) traverse the membrane as a helical segment.

The protein belongs to the ATPase C chain family. F-type ATPases have 2 components, CF(1) - the catalytic core - and CF(0) - the membrane proton channel. CF(1) has five subunits: alpha(3), beta(3), gamma(1), delta(1), epsilon(1). CF(0) has three main subunits: a, b and c. Interacts with TMEM70 and TMEM242. Post-translationally, trimethylated by ATPSCKMT at Lys-110. Methylation is required for proper incorporation of the C subunit into the ATP synthase complex and mitochondrial respiration.

It is found in the mitochondrion membrane. Functionally, mitochondrial membrane ATP synthase (F(1)F(0) ATP synthase or Complex V) produces ATP from ADP in the presence of a proton gradient across the membrane which is generated by electron transport complexes of the respiratory chain. F-type ATPases consist of two structural domains, F(1) - containing the extramembraneous catalytic core and F(0) - containing the membrane proton channel, linked together by a central stalk and a peripheral stalk. During catalysis, ATP synthesis in the catalytic domain of F(1) is coupled via a rotary mechanism of the central stalk subunits to proton translocation. Part of the complex F(0) domain. A homomeric c-ring of probably 10 subunits is part of the complex rotary element. In Pongo abelii (Sumatran orangutan), this protein is ATP synthase F(0) complex subunit C3, mitochondrial.